Reading from the N-terminus, the 266-residue chain is Regulatory protein RecX (266 aa).

This sequence belongs to the RecX family.

The protein resides in the cytoplasm. Its function is as follows. Modulates RecA activity. The polypeptide is Regulatory protein RecX (Leuconostoc citreum (strain KM20)).